The chain runs to 199 residues: Casparian strip membrane protein 1 (199 aa).

The Cytoplasmic portion of the chain corresponds to 1 to 37 (MKSESAAIDIPESSSVAKGKAPLIAVSRNEKGGYRKG). A helical membrane pass occupies residues 38 to 58 (IAIFDFILRLAAIATALAAAA). Residues 59-87 (AMGTSDETLPFFTQFFQFQASYDDLPTFQ) lie on the Extracellular side of the membrane. A helical membrane pass occupies residues 88 to 108 (FFVIAIAIVGGYLVLSLPFSI). At 109-120 (VAIVRPHAVGPR) the chain is on the cytoplasmic side. A helical membrane pass occupies residues 121-141 (LLLIILDAVALTLNTAAGAAA). Residues 142–173 (AAIVYLAHNGNSNTNWLAICQQYGDFCQKVSG) are Extracellular-facing. A helical membrane pass occupies residues 174–194 (AVVASFITVVIFVFLIVLSAF). The Cytoplasmic portion of the chain corresponds to 195–199 (ALRRH).

This sequence belongs to the Casparian strip membrane proteins (CASP) family. In terms of assembly, homodimer and heterodimers.

The protein resides in the cell membrane. In terms of biological role, regulates membrane-cell wall junctions and localized cell wall deposition. Required for establishment of the Casparian strip membrane domain (CSD) and the subsequent formation of Casparian strips, a cell wall modification of the root endodermis that determines an apoplastic barrier between the intraorganismal apoplasm and the extraorganismal apoplasm and prevents lateral diffusion. This is Casparian strip membrane protein 1 from Populus trichocarpa (Western balsam poplar).